The sequence spans 66 residues: MWKVNDQGFLNISVTGTKFNLIATTGKLGFYTDPPSHLIVIPLKIFPVHKFSKNEPNKKQKRFIYF.

N-linked (GlcNAc...) asparagine; by host glycosylation is present at asparagine 11.

The protein belongs to the asfivirus I177L family.

It is found in the virion. The sequence is that of Protein I177L from Ornithodoros (relapsing fever ticks).